We begin with the raw amino-acid sequence, 562 residues long: Tryptophan 2-monooxygenase (562 aa).

FMN is bound by residues Ser-54, Glu-74, Arg-76, Arg-82, and Arg-104. Arg-104 is a substrate binding site.

Belongs to the tryptophan 2-monooxygenase family. It depends on FMN as a cofactor.

It catalyses the reaction L-tryptophan + O2 = indole-3-acetamide + CO2 + H2O. It functions in the pathway plant hormone metabolism; auxin biosynthesis. This is Tryptophan 2-monooxygenase (iaaM) from Pantoea agglomerans pv. gypsophilae (Erwinia herbicola).